A 522-amino-acid chain; its full sequence is Zinc finger protein C25B8.19c (522 aa).

5 disordered regions span residues 1 to 25 (MSSD…LPTT), 61 to 96 (DPQA…SNSN), 235 to 265 (QRQS…QEVT), 311 to 386 (QPSS…HTLS), and 413 to 462 (NSAQ…STSS). Positions 84–96 (AGNTNTPTTSNSN) are enriched in low complexity. 2 stretches are compositionally biased toward polar residues: residues 311-321 (QPSSRDLQNHP) and 335-344 (ASNTLNHANG). Residues 345–362 (NQAENASESSTSQSNDSQ) are compositionally biased toward low complexity. Positions 413-427 (NSAQAHPMGQQSDSN) are enriched in polar residues. Positions 428 to 438 (YSDHHNNDKRA) are enriched in basic and acidic residues. Positions 453–462 (SHTGSSSTSS) are enriched in low complexity. 2 consecutive C2H2-type zinc fingers follow at residues 468–495 (YRCT…GERP) and 496–522 (FVCD…IHGL).

Its subcellular location is the nucleus. This Schizosaccharomyces pombe (strain 972 / ATCC 24843) (Fission yeast) protein is Zinc finger protein C25B8.19c.